Here is a 133-residue protein sequence, read N- to C-terminus: Large ribosomal subunit protein eL32 (133 aa).

It belongs to the eukaryotic ribosomal protein eL32 family.

This chain is Large ribosomal subunit protein eL32 (rpl32), found in Dictyostelium discoideum (Social amoeba).